We begin with the raw amino-acid sequence, 330 residues long: ADP-L-glycero-D-manno-heptose-6-epimerase (330 aa).

Residues 11–12 (FI), 32–33 (DN), Lys39, Lys54, 75–79 (EGACS), and Asn92 contribute to the NADP(+) site. Catalysis depends on Tyr139, which acts as the Proton acceptor. Lys143 contributes to the NADP(+) binding site. Substrate is bound at residue Asn168. NADP(+) contacts are provided by Val169 and Lys177. Lys177 acts as the Proton acceptor in catalysis. Substrate is bound by residues Arg179, His186, 200 to 203 (FGEY), Arg213, and Tyr292.

Belongs to the NAD(P)-dependent epimerase/dehydratase family. HldD subfamily. As to quaternary structure, homopentamer. Requires NADP(+) as cofactor.

It carries out the reaction ADP-D-glycero-beta-D-manno-heptose = ADP-L-glycero-beta-D-manno-heptose. It functions in the pathway nucleotide-sugar biosynthesis; ADP-L-glycero-beta-D-manno-heptose biosynthesis; ADP-L-glycero-beta-D-manno-heptose from D-glycero-beta-D-manno-heptose 7-phosphate: step 4/4. Functionally, catalyzes the interconversion between ADP-D-glycero-beta-D-manno-heptose and ADP-L-glycero-beta-D-manno-heptose via an epimerization at carbon 6 of the heptose. The protein is ADP-L-glycero-D-manno-heptose-6-epimerase of Burkholderia multivorans (strain ATCC 17616 / 249).